Consider the following 24-residue polypeptide: GLGSVLGKILKMGANLLGGAPKGA.

In terms of tissue distribution, expressed by the skin glands.

It is found in the secreted. Its function is as follows. Antimicrobial peptide. The protein is Caerulein precursor fragment BM1 of Xenopus boumbaensis (Mawa clawed frog).